The primary structure comprises 707 residues: DNA ligase (707 aa).

Residues 1–23 (MSSKATQDPEAVLAEQSDDATEA) are disordered. NAD(+) is bound by residues 53–57 (DAEFD), 103–104 (SL), and E133. The N6-AMP-lysine intermediate role is filled by K135. 4 residues coordinate NAD(+): R156, E196, K315, and K339. Zn(2+) is bound by residues C433, C436, C452, and C458. Residues 622 to 707 (SIERTLDGLS…LENGPDTPDS (86 aa)) form the BRCT domain.

The protein belongs to the NAD-dependent DNA ligase family. LigA subfamily. Mg(2+) serves as cofactor. Mn(2+) is required as a cofactor.

It carries out the reaction NAD(+) + (deoxyribonucleotide)n-3'-hydroxyl + 5'-phospho-(deoxyribonucleotide)m = (deoxyribonucleotide)n+m + AMP + beta-nicotinamide D-nucleotide.. In terms of biological role, DNA ligase that catalyzes the formation of phosphodiester linkages between 5'-phosphoryl and 3'-hydroxyl groups in double-stranded DNA using NAD as a coenzyme and as the energy source for the reaction. It is essential for DNA replication and repair of damaged DNA. This Mycolicibacterium vanbaalenii (strain DSM 7251 / JCM 13017 / BCRC 16820 / KCTC 9966 / NRRL B-24157 / PYR-1) (Mycobacterium vanbaalenii) protein is DNA ligase.